Consider the following 181-residue polypeptide: Large ribosomal subunit protein uL10 (181 aa).

Belongs to the universal ribosomal protein uL10 family. As to quaternary structure, part of the ribosomal stalk of the 50S ribosomal subunit. The N-terminus interacts with L11 and the large rRNA to form the base of the stalk. The C-terminus forms an elongated spine to which L12 dimers bind in a sequential fashion forming a multimeric L10(L12)X complex.

Forms part of the ribosomal stalk, playing a central role in the interaction of the ribosome with GTP-bound translation factors. The protein is Large ribosomal subunit protein uL10 of Nostoc sp. (strain PCC 7120 / SAG 25.82 / UTEX 2576).